The sequence spans 355 residues: Phospho-N-acetylmuramoyl-pentapeptide-transferase (355 aa).

Helical transmembrane passes span 14–34, 40–60, 84–104, 107–127, 147–167, 176–196, 205–225, 227–247, 268–290, and 334–354; these read PTGT…VVFF, LLIP…QVVP, GTPT…ALIW, FTPN…IGWL, LILQ…NQVS, LVIP…VAES, VDGL…IIIA, SHPD…GFIF, ALAA…GLFF, and TKIV…AIWS.

This sequence belongs to the glycosyltransferase 4 family. MraY subfamily. Mg(2+) is required as a cofactor.

It localises to the cell inner membrane. It catalyses the reaction UDP-N-acetyl-alpha-D-muramoyl-L-alanyl-gamma-D-glutamyl-meso-2,6-diaminopimeloyl-D-alanyl-D-alanine + di-trans,octa-cis-undecaprenyl phosphate = di-trans,octa-cis-undecaprenyl diphospho-N-acetyl-alpha-D-muramoyl-L-alanyl-D-glutamyl-meso-2,6-diaminopimeloyl-D-alanyl-D-alanine + UMP. The protein operates within cell wall biogenesis; peptidoglycan biosynthesis. Its function is as follows. Catalyzes the initial step of the lipid cycle reactions in the biosynthesis of the cell wall peptidoglycan: transfers peptidoglycan precursor phospho-MurNAc-pentapeptide from UDP-MurNAc-pentapeptide onto the lipid carrier undecaprenyl phosphate, yielding undecaprenyl-pyrophosphoryl-MurNAc-pentapeptide, known as lipid I. The polypeptide is Phospho-N-acetylmuramoyl-pentapeptide-transferase (Microcystis aeruginosa (strain NIES-843 / IAM M-2473)).